The following is a 491-amino-acid chain: UDP-N-acetylmuramate--L-alanine ligase (491 aa).

Position 126-132 (126-132) interacts with ATP; it reads GTHGKTT.

Belongs to the MurCDEF family.

The protein localises to the cytoplasm. It carries out the reaction UDP-N-acetyl-alpha-D-muramate + L-alanine + ATP = UDP-N-acetyl-alpha-D-muramoyl-L-alanine + ADP + phosphate + H(+). It participates in cell wall biogenesis; peptidoglycan biosynthesis. In terms of biological role, cell wall formation. In Escherichia coli O1:K1 / APEC, this protein is UDP-N-acetylmuramate--L-alanine ligase.